Here is a 284-residue protein sequence, read N- to C-terminus: 4-hydroxy-3-methylbut-2-enyl diphosphate reductase (284 aa).

C12 serves as a coordination point for [4Fe-4S] cluster. Residues H40 and H72 each contribute to the (2E)-4-hydroxy-3-methylbut-2-enyl diphosphate site. Dimethylallyl diphosphate contacts are provided by H40 and H72. Isopentenyl diphosphate is bound by residues H40 and H72. C94 is a binding site for [4Fe-4S] cluster. H122 contributes to the (2E)-4-hydroxy-3-methylbut-2-enyl diphosphate binding site. H122 is a binding site for dimethylallyl diphosphate. H122 is a binding site for isopentenyl diphosphate. E124 (proton donor) is an active-site residue. T161 is a (2E)-4-hydroxy-3-methylbut-2-enyl diphosphate binding site. Residue C193 participates in [4Fe-4S] cluster binding. S221, N223, and S264 together coordinate (2E)-4-hydroxy-3-methylbut-2-enyl diphosphate. Dimethylallyl diphosphate contacts are provided by S221, N223, and S264. The isopentenyl diphosphate site is built by S221, N223, and S264.

It belongs to the IspH family. The cofactor is [4Fe-4S] cluster.

The catalysed reaction is isopentenyl diphosphate + 2 oxidized [2Fe-2S]-[ferredoxin] + H2O = (2E)-4-hydroxy-3-methylbut-2-enyl diphosphate + 2 reduced [2Fe-2S]-[ferredoxin] + 2 H(+). It carries out the reaction dimethylallyl diphosphate + 2 oxidized [2Fe-2S]-[ferredoxin] + H2O = (2E)-4-hydroxy-3-methylbut-2-enyl diphosphate + 2 reduced [2Fe-2S]-[ferredoxin] + 2 H(+). It functions in the pathway isoprenoid biosynthesis; dimethylallyl diphosphate biosynthesis; dimethylallyl diphosphate from (2E)-4-hydroxy-3-methylbutenyl diphosphate: step 1/1. It participates in isoprenoid biosynthesis; isopentenyl diphosphate biosynthesis via DXP pathway; isopentenyl diphosphate from 1-deoxy-D-xylulose 5-phosphate: step 6/6. In terms of biological role, catalyzes the conversion of 1-hydroxy-2-methyl-2-(E)-butenyl 4-diphosphate (HMBPP) into a mixture of isopentenyl diphosphate (IPP) and dimethylallyl diphosphate (DMAPP). Acts in the terminal step of the DOXP/MEP pathway for isoprenoid precursor biosynthesis. The sequence is that of 4-hydroxy-3-methylbut-2-enyl diphosphate reductase from Dehalococcoides mccartyi (strain ATCC BAA-2100 / JCM 16839 / KCTC 5957 / BAV1).